A 1037-amino-acid polypeptide reads, in one-letter code: Multidrug resistance protein MdtF (1037 aa).

Residues 1-9 (MANYFIDRP) are Cytoplasmic-facing. Residues 10-28 (VFAWVLAIIMMLAGGLAIM) traverse the membrane as a helical segment. Residues 29–339 (NLPVAQYPQI…TPFIEISIQE (311 aa)) lie on the Periplasmic side of the membrane. Residues 340 to 359 (VFKTLVEAIILVFLVMYLFL) form a helical membrane-spanning segment. At 360-365 (QNFRAT) the chain is on the cytoplasmic side. The chain crosses the membrane as a helical span at residues 366–385 (IIPTIAVPVVILGTFAILSA). At 386 to 391 (VGFTIN) the chain is on the periplasmic side. A helical membrane pass occupies residues 392-413 (TLTMFGMVLAIGLLVDDAIVVV). At 414–441 (ENVERVIAEDKLPPKEATHKSMGQIQRA) the chain is on the cytoplasmic side. Residues 442 to 460 (LVGIAVVLSAVFMPMAFMS) form a helical membrane-spanning segment. Residues 461–473 (GATGEIYRQFSIT) are Periplasmic-facing. Residues 474–496 (LISSMLLSVFVAMSLTPALCATI) form a helical membrane-spanning segment. Over 497-536 (LKAAPEGGHKPNALFARFNTLFEKSTQHYTDSTRSLLRCT) the chain is Cytoplasmic. A helical membrane pass occupies residues 537–555 (GRYMVVYLLICAGMAVLFL). At 556–870 (RTPTSFLPEE…SYQEALSSNQ (315 aa)) the chain is on the periplasmic side. The helical transmembrane segment at 871–890 (APALYAISLVVVFLALAALY) threads the bilayer. Residues 891-896 (ESWSIP) lie on the Cytoplasmic side of the membrane. A helical membrane pass occupies residues 897–916 (FSVMLVVPLGVVGALLATDL). At 917–922 (RGLSND) the chain is on the periplasmic side. The helical transmembrane segment at 923–944 (VYFQVGLLTTIGLSAKNAILIV) threads the bilayer. The Cytoplasmic segment spans residues 945–972 (EFAVEMMQKEGKTPIEAIIEAARMRLRP). A helical transmembrane segment spans residues 973 to 991 (ILMTSLAFILGVLPLVISH). At 992–1004 (GAGSGAQNAVGTG) the chain is on the periplasmic side. Residues 1005–1027 (VMGGMFAATVLAIYFVPVFFVVV) traverse the membrane as a helical segment. Over 1028–1037 (EHLFARFKKA) the chain is Cytoplasmic.

The protein belongs to the resistance-nodulation-cell division (RND) (TC 2.A.6) family. In terms of assembly, homotrimer. Part of the tripartite efflux system MdtEF-TolC, which is composed of an inner membrane transporter, MdtF, a membrane fusion protein, MdtE, and an outer membrane component, TolC. The complex forms a large protein conduit and can translocate molecules across both the inner and outer membranes.

The protein localises to the cell inner membrane. In terms of biological role, part of the tripartite efflux system MdtEF-TolC, which confers resistance to compounds such as rhodamine 6G, erythromycin, doxorubicin, ethidium bromide, TPP, SDS, deoxycholate, crystal violet and benzalkonium. In Escherichia coli (strain K12), this protein is Multidrug resistance protein MdtF (mdtF).